A 475-amino-acid chain; its full sequence is Lipid II flippase MurJ (475 aa).

Residues 1-2 (MS) are Cytoplasmic-facing. The helical transmembrane segment at 3-23 (ILFSSILFSIATFFSRILGLF) threads the bilayer. Over 24 to 35 (RDVLFAKYFGVS) the chain is Periplasmic. Residues 36 to 56 (YELDAYFIAIMFPFFLRKVFG) form a helical membrane-spanning segment. The Cytoplasmic segment spans residues 57-78 (EGAMSSAFVPLYSEKSGEEKDK). A helical transmembrane segment spans residues 79–99 (FLSSVINGFSLIILALVILSY). Residues 100–123 (FFPELIINLFGAGSSHETKILAKK) are Periplasmic-facing. The chain crosses the membrane as a helical span at residues 124 to 144 (LLLITSPSIYFIFLWAISYSI). Residues 145-150 (LNTNNK) lie on the Cytoplasmic side of the membrane. The chain crosses the membrane as a helical span at residues 151-171 (FFWPALTPSISNITIIIGTFL). Residues 172–175 (STKY) are Periplasmic-facing. Residues 176–196 (GIISPTIGFLIGSILMFFSII) form a helical membrane-spanning segment. Residues 197-213 (KSIIKHKYYFTIKHFPH) lie on the Cytoplasmic side of the membrane. A helical transmembrane segment spans residues 214 to 238 (FLKLFFPTFMTMVVSQINTVVDMNV). The Periplasmic segment spans residues 239–249 (VSFYDKGSISY). The helical transmembrane segment at 250 to 271 (LQYASRFYLLPYGLFAVSVSTV) threads the bilayer. Over 272–287 (VLSKISNDRKNFNYHL) the chain is Cytoplasmic. Residues 288–308 (NDALKTTLFFTIPSMVGLIFL) form a helical membrane-spanning segment. At 309 to 332 (STPIIRFFYEHGAFTSKDTLITSK) the chain is on the periplasmic side. Residues 333–353 (ILIAYTLGLPFYGIYSTISRS) traverse the membrane as a helical segment. Residues 354–362 (YHAIKNTKT) are Cytoplasmic-facing. Residues 363-383 (PFIAATIVSLSNIILDIIFGL) traverse the membrane as a helical segment. Over 384–386 (KYG) the chain is Periplasmic. The helical transmembrane segment at 387–407 (PIGVALATSIAGIIGVLYLLF) threads the bilayer. Over 408–416 (SVKTFPIKD) the chain is Cytoplasmic. The chain crosses the membrane as a helical span at residues 417-437 (FLKISLNSLIMLFVIYLTDFT). Residues 438-440 (DNE) are Periplasmic-facing. Residues 441–461 (FWFLIQILIGILVYLIFSSIF) form a helical membrane-spanning segment. At 462–475 (YRDLIRRFLYARKK) the chain is on the cytoplasmic side.

Belongs to the MurJ/MviN family.

The protein localises to the cell inner membrane. Its pathway is cell wall biogenesis; peptidoglycan biosynthesis. Involved in peptidoglycan biosynthesis. Transports lipid-linked peptidoglycan precursors from the inner to the outer leaflet of the cytoplasmic membrane. This Thermosipho africanus (strain TCF52B) protein is Lipid II flippase MurJ.